The following is a 1363-amino-acid chain: DNA-directed RNA polymerase subunit beta (1363 aa).

This sequence belongs to the RNA polymerase beta chain family. The RNAP catalytic core consists of 2 alpha, 1 beta, 1 beta' and 1 omega subunit. When a sigma factor is associated with the core the holoenzyme is formed, which can initiate transcription.

The enzyme catalyses RNA(n) + a ribonucleoside 5'-triphosphate = RNA(n+1) + diphosphate. In terms of biological role, DNA-dependent RNA polymerase catalyzes the transcription of DNA into RNA using the four ribonucleoside triphosphates as substrates. The protein is DNA-directed RNA polymerase subunit beta of Neorickettsia risticii (Ehrlichia risticii).